Here is a 156-residue protein sequence, read N- to C-terminus: Phosphoribosyl-AMP cyclohydrolase (156 aa).

Mg(2+) is bound at residue D106. C107 provides a ligand contact to Zn(2+). Mg(2+) is bound by residues D108 and D110. 2 residues coordinate Zn(2+): C123 and C130.

This sequence belongs to the PRA-CH family. In terms of assembly, homodimer. Mg(2+) serves as cofactor. The cofactor is Zn(2+).

The protein localises to the cytoplasm. It catalyses the reaction 1-(5-phospho-beta-D-ribosyl)-5'-AMP + H2O = 1-(5-phospho-beta-D-ribosyl)-5-[(5-phospho-beta-D-ribosylamino)methylideneamino]imidazole-4-carboxamide. It functions in the pathway amino-acid biosynthesis; L-histidine biosynthesis; L-histidine from 5-phospho-alpha-D-ribose 1-diphosphate: step 3/9. In terms of biological role, catalyzes the hydrolysis of the adenine ring of phosphoribosyl-AMP. The chain is Phosphoribosyl-AMP cyclohydrolase from Gluconobacter oxydans (strain 621H) (Gluconobacter suboxydans).